Reading from the N-terminus, the 523-residue chain is Galactarate dehydratase (L-threo-forming) (523 aa).

This sequence belongs to the UxaA family. In terms of assembly, homodimer. Requires Fe(2+) as cofactor.

It catalyses the reaction galactarate = 5-dehydro-4-deoxy-D-glucarate + H2O. Its pathway is carbohydrate acid metabolism; galactarate degradation; D-glycerate from galactarate: step 1/3. Functionally, catalyzes the dehydration of galactarate to form 5-dehydro-4-deoxy-D-glucarate (5-KDG). This Escherichia coli (strain K12) protein is Galactarate dehydratase (L-threo-forming).